The chain runs to 283 residues: Bifunctional protein FolD (283 aa).

NADP(+) is bound by residues 164 to 166 (GRS), Ser189, and Ile230.

The protein belongs to the tetrahydrofolate dehydrogenase/cyclohydrolase family. Homodimer.

It catalyses the reaction (6R)-5,10-methylene-5,6,7,8-tetrahydrofolate + NADP(+) = (6R)-5,10-methenyltetrahydrofolate + NADPH. The catalysed reaction is (6R)-5,10-methenyltetrahydrofolate + H2O = (6R)-10-formyltetrahydrofolate + H(+). The protein operates within one-carbon metabolism; tetrahydrofolate interconversion. In terms of biological role, catalyzes the oxidation of 5,10-methylenetetrahydrofolate to 5,10-methenyltetrahydrofolate and then the hydrolysis of 5,10-methenyltetrahydrofolate to 10-formyltetrahydrofolate. This is Bifunctional protein FolD from Lacticaseibacillus paracasei (strain ATCC 334 / BCRC 17002 / CCUG 31169 / CIP 107868 / KCTC 3260 / NRRL B-441) (Lactobacillus paracasei).